Reading from the N-terminus, the 591-residue chain is Autotransporter adhesin NhhA (591 aa).

The N-terminal stretch at 1 to 51 (MNKIYRIIWNSALNAWVVVSELTRNHTKRASATVKTAVLATLLFATVQASA) is a signal peptide. The segment at 52-503 (NNEEQEEDLY…TNVAQLKGVA (452 aa)) is surface exposed passenger domain. A translocator domain region spans residues 504–591 (QNLNNRIDNV…GASASVGYQW (88 aa)). 4 beta stranded membrane passes run 537–547 (GKSMMAIGGGT), 551–561 (EAGYAIGYSSI), 570–576 (KGTASGN), and 580–591 (HFGASASVGYQW).

This sequence belongs to the autotransporter-2 (AT-2) (TC 1.B.40) family. As to quaternary structure, homotrimer.

It is found in the cell surface. The protein localises to the cell outer membrane. Functionally, involved in adhesion of capsulated meningococci to host epithelial cells. Interacts with laminin and heparan sulfate, promoting the adherence to the extracellular matrix (ECM) components. The sequence is that of Autotransporter adhesin NhhA from Neisseria meningitidis serogroup B (strain ATCC BAA-335 / MC58).